The primary structure comprises 77 residues: Integrin beta-2 (77 aa).

Cysteine 36 and cysteine 43 are disulfide-bonded. A glycan (N-linked (GlcNAc...) asparagine) is linked at asparagine 54.

This sequence belongs to the integrin beta chain family. As to quaternary structure, dimer of an alpha and beta subunit.

The protein resides in the membrane. Integrins are a large family of cell surface glycoproteins that mediate cell to cell and cell to matrix adhesion. The polypeptide is Integrin beta-2 (itgb2) (Xenopus laevis (African clawed frog)).